A 51-amino-acid polypeptide reads, in one-letter code: rpoE leader peptide (51 aa).

Its function is as follows. A short protein whose stop codon overlaps with the start codon of downstream rpoE; a premature stop codon at position 12 results in decreased expression of ECF sigma factor RpoE, thus they are translationally coupled. This Escherichia coli (strain K12) protein is rpoE leader peptide.